Here is a 114-residue protein sequence, read N- to C-terminus: Flagellar hook-basal body complex protein FliE (114 aa).

Belongs to the FliE family.

The protein localises to the bacterial flagellum basal body. This is Flagellar hook-basal body complex protein FliE from Burkholderia multivorans (strain ATCC 17616 / 249).